Consider the following 580-residue polypeptide: Amino-acid acetyltransferase, mitochondrial (580 aa).

The region spanning 403 to 560 (LTMQNLFDDK…NPRHKNGVVN (158 aa)) is the N-acetyltransferase domain.

This sequence belongs to the acetyltransferase family.

It localises to the mitochondrion. It catalyses the reaction L-glutamate + acetyl-CoA = N-acetyl-L-glutamate + CoA + H(+). It functions in the pathway amino-acid biosynthesis; L-arginine biosynthesis; N(2)-acetyl-L-ornithine from L-glutamate: step 1/4. N-acetylglutamate synthase involved in arginine biosynthesis. This chain is Amino-acid acetyltransferase, mitochondrial (ARG2), found in Candida dubliniensis (strain CD36 / ATCC MYA-646 / CBS 7987 / NCPF 3949 / NRRL Y-17841) (Yeast).